The following is a 37-amino-acid chain: Large ribosomal subunit protein bL36 (37 aa).

This sequence belongs to the bacterial ribosomal protein bL36 family.

This is Large ribosomal subunit protein bL36 from Dechloromonas aromatica (strain RCB).